The sequence spans 272 residues: Glycerol-3-phosphate acyltransferase (272 aa).

A run of 6 helical transmembrane segments spans residues 9-29 (IIIL…GILI), 60-80 (AIVM…CLLI), 99-119 (VIIY…CFYF), 149-169 (ASIS…ICLI), 173-193 (VSLA…IPHL), and 226-246 (LNWW…VLVI).

It belongs to the PlsY family. Probably interacts with PlsX.

The protein resides in the cell membrane. The enzyme catalyses an acyl phosphate + sn-glycerol 3-phosphate = a 1-acyl-sn-glycero-3-phosphate + phosphate. It functions in the pathway lipid metabolism; phospholipid metabolism. Functionally, catalyzes the transfer of an acyl group from acyl-phosphate (acyl-PO(4)) to glycerol-3-phosphate (G3P) to form lysophosphatidic acid (LPA). This enzyme utilizes acyl-phosphate as fatty acyl donor, but not acyl-CoA or acyl-ACP. This chain is Glycerol-3-phosphate acyltransferase, found in Malacoplasma penetrans (strain HF-2) (Mycoplasma penetrans).